We begin with the raw amino-acid sequence, 219 residues long: 2-phospho-L-lactate guanylyltransferase (219 aa).

Belongs to the CofC family. Homodimer.

The catalysed reaction is (2S)-2-phospholactate + GTP + H(+) = (2S)-lactyl-2-diphospho-5'-guanosine + diphosphate. Its pathway is cofactor biosynthesis; coenzyme F420 biosynthesis. In terms of biological role, guanylyltransferase that catalyzes the activation of (2S)-2-phospholactate (2-PL) as (2S)-lactyl-2-diphospho-5'-guanosine, via the condensation of 2-PL with GTP. It is involved in the biosynthesis of coenzyme F420, a hydride carrier cofactor. This is 2-phospho-L-lactate guanylyltransferase from Methanocaldococcus vulcanius (strain ATCC 700851 / DSM 12094 / M7) (Methanococcus vulcanius).